We begin with the raw amino-acid sequence, 185 residues long: Large ribosomal subunit protein bL25 (185 aa).

This sequence belongs to the bacterial ribosomal protein bL25 family. CTC subfamily. In terms of assembly, part of the 50S ribosomal subunit; part of the 5S rRNA/L5/L18/L25 subcomplex. Contacts the 5S rRNA. Binds to the 5S rRNA independently of L5 and L18.

Its function is as follows. This is one of the proteins that binds to the 5S RNA in the ribosome where it forms part of the central protuberance. This Chlamydia trachomatis serovar A (strain ATCC VR-571B / DSM 19440 / HAR-13) protein is Large ribosomal subunit protein bL25.